A 105-amino-acid chain; its full sequence is Nucleoid-associated protein SE_2306 (105 aa).

Residues M1–G40 form a disordered region. Residues M7 to K16 show a composition bias toward low complexity. Residues M21–V33 are compositionally biased toward basic and acidic residues.

This sequence belongs to the YbaB/EbfC family. Homodimer.

Its subcellular location is the cytoplasm. The protein resides in the nucleoid. Its function is as follows. Binds to DNA and alters its conformation. May be involved in regulation of gene expression, nucleoid organization and DNA protection. The protein is Nucleoid-associated protein SE_2306 of Staphylococcus epidermidis (strain ATCC 12228 / FDA PCI 1200).